A 290-amino-acid chain; its full sequence is Isopentenyl-diphosphate Delta-isomerase II (290 aa).

One can recognise a Nudix hydrolase domain in the interval 108–260; sequence MLHRAFTVFL…GLKLSPWFRL (153 aa). Residues C145 and E207 contribute to the active site.

The protein belongs to the IPP isomerase type 1 family.

It catalyses the reaction isopentenyl diphosphate = dimethylallyl diphosphate. The protein operates within isoprenoid biosynthesis; dimethylallyl diphosphate biosynthesis; dimethylallyl diphosphate from isopentenyl diphosphate: step 1/1. It participates in porphyrin-containing compound metabolism; chlorophyll biosynthesis. In terms of biological role, catalyzes the 1,3-allylic rearrangement of the homoallylic substrate isopentenyl (IPP) to its highly electrophilic allylic isomer, dimethylallyl diphosphate (DMAPP). This Clarkia xantiana (Gunsight clarkia) protein is Isopentenyl-diphosphate Delta-isomerase II (IPI2).